We begin with the raw amino-acid sequence, 628 residues long: Dual specificity testis-specific protein kinase 1 (628 aa).

Residues 1-35 (MAGERPPLRGPGPGETPVEGPGGAGGGPGRGRPSS) form a disordered region. Residues 20–30 (GPGGAGGGPGR) are compositionally biased toward gly residues. Residues 52-310 (FDCAEKIGAG…EITQHLEQIL (259 aa)) form the Protein kinase domain. Residues 58-66 (IGAGFFSEV) and lysine 81 each bind ATP. The active-site Proton acceptor is aspartate 170. Serine 215 carries the phosphoserine; by autocatalysis modification. Disordered stretches follow at residues 330–376 (TYNQ…DNLT), 424–490 (PESL…QLPL), and 538–568 (RAQH…EEGL). Position 338 is an omega-N-methylarginine (arginine 338). The segment covering 348–357 (SDPRLSRSRS) has biased composition (basic and acidic residues). The required for interaction with YWHAB stretch occupies residues 421-526 (VASPESLVQP…NNNPPAVVVN (106 aa)). Residue serine 439 is modified to Phosphoserine. Over residues 478-487 (EPEPPGPAPQ) the composition is skewed to pro residues. Residues 529 to 626 (QGWAREPWNR…PTPSLQLPGA (98 aa)) are required for interaction with PARVA. The required for interaction with SPRED1 and SPRY2. Required for TESK1-mediated dephosphorylation of SPRY2 and SPRY2 inhibition of ERK phosphorylation stretch occupies residues 529–628 (QGWAREPWNR…PSLQLPGARS (100 aa)).

Belongs to the protein kinase superfamily. TKL Ser/Thr protein kinase family. As to quaternary structure, interacts (via both C- and N-termini) with SPRY4 (via C-terminus); the interaction inhibits TESK1 kinase activity. Interacts with TAOK1; the interaction inhibits TAOK1 kinase activity. Interacts (via C-terminus) with SPRED1 (via C-terminus); the interaction inhibits TESK1 kinase activity. Interacts (via C-terminus) with PARVA/PARVIN (via C-terminus); the interaction inhibits TESK1 kinase activity. Interacts with YWHAB/14-3-3 beta; the interaction is dependent on the phosphorylation of TESK1 Ser-439 and inhibits TESK1 kinase activity. Interacts with SPRY1, SPRY3 and SPRED2. Interacts (via C-terminus) with SPRY2 (via C-terminus); the interaction disrupts SPRY2 interaction with PPP2CA/PP2A-C, possibly by vesicular sequestration of SPRY2. Therefore dephosphorylation of SPRY2 by the serine/threonine-protein phosphatase 2A (PP2A) holoenzyme is lost, inhibiting its interaction with GRB2. Mg(2+) is required as a cofactor. The cofactor is Mn(2+). Post-translationally, autophosphorylated on serine and tyrosine residues. As to expression, weakly expressed in sciatic nerves (at protein level). Highly expressed in testicular germ cells. Expressed at low levels in brain, lung, heart, liver and kidney.

The protein resides in the cytoplasm. It is found in the perinuclear region. Its subcellular location is the cytoskeleton. It localises to the microtubule organizing center. The protein localises to the centrosome. The protein resides in the cell projection. It is found in the lamellipodium. It carries out the reaction L-seryl-[protein] + ATP = O-phospho-L-seryl-[protein] + ADP + H(+). The catalysed reaction is L-threonyl-[protein] + ATP = O-phospho-L-threonyl-[protein] + ADP + H(+). The enzyme catalyses L-tyrosyl-[protein] + ATP = O-phospho-L-tyrosyl-[protein] + ADP + H(+). Its activity is regulated as follows. Activated by autophosphorylation on Ser-215. Kinase activity is inhibited by SPRED1. Dual specificity protein kinase activity catalyzing autophosphorylation and phosphorylation of exogenous substrates on both serine/threonine and tyrosine residues. Regulates the cellular cytoskeleton by enhancing actin stress fiber formation via phosphorylation of cofilin and by preventing microtubule breakdown via inhibition of TAOK1/MARKK kinase activity. Inhibits podocyte motility via regulation of actin cytoskeletal dynamics and phosphorylation of CFL1. Positively regulates integrin-mediated cell spreading, via phosphorylation of cofilin. Suppresses ciliogenesis via multiple pathways; phosphorylation of CFL1, suppression of ciliary vesicle directional trafficking to the ciliary base, and by facilitating YAP1 nuclear localization where it acts as a transcriptional corepressor of the TEAD4 target genes AURKA and PLK1. Probably plays a central role at and after the meiotic phase of spermatogenesis. This is Dual specificity testis-specific protein kinase 1 (Tesk1) from Rattus norvegicus (Rat).